A 99-amino-acid chain; its full sequence is MMNMQNMMKQAQKLQKQMEQKQADLAATSFSGKSAQELVTATFTGDKRLVNITFKEAVVDPEDIETLQDMTTQAINDALTQIDEATKKSLGAFAGKLPF.

This sequence belongs to the YbaB/EbfC family. In terms of assembly, homodimer.

It is found in the cytoplasm. The protein localises to the nucleoid. In terms of biological role, binds to DNA and alters its conformation. May be involved in regulation of gene expression, nucleoid organization and DNA protection. In Streptococcus equi subsp. zooepidemicus (strain H70), this protein is Nucleoid-associated protein SZO_16661.